Consider the following 222-residue polypeptide: Salivary anticoagulant protein P23 (222 aa).

Residues Met1–Ala17 form the signal peptide. Asn56, Asn73, Asn109, and Asn114 each carry an N-linked (GlcNAc...) asparagine glycan.

As to expression, salivary gland (at protein level). Adult midgut.

It localises to the secreted. Inhibits host coagulation by delaying thrombin generation and reducing endogenous thrombin potential (ETP). The sequence is that of Salivary anticoagulant protein P23 from Ixodes scapularis (Black-legged tick).